The chain runs to 270 residues: Probable thioesterase BOA10 (270 aa).

This sequence belongs to the AMT4 thioesterase family.

It participates in polyketide biosynthesis. In terms of biological role, probable thioesterase; part of the gene cluster B that mediates the biosynthesis of botcinic acid and its botcinin derivatives, acetate-derived polyketides that contribute to virulence when combined with the sesquiterpene botrydial. Botcinic acid and its derivatives have been shown to induce chlorosis and necrosis during host plant infection, but also have antifungal activities. Two polyketide synthases, BOA6 and BOA9, are involved in the biosynthesis of botcinins. BOA6 mediates the formation of the per-methylated tetraketide core by condensation of four units of malonyl-CoA with one unit of acetyl-CoA, which would be methylated in activated methylene groups to yield a bicyclic acid intermediate that could then either be converted to botrylactone derivatives or lose the starter acetate unit through a retro-Claisen type C-C bond cleavage to yield botcinin derivatives. The second polyketide synthase, BOA9, is probably required for the biosynthesis of the tetraketide side chain of botcinins. The methyltransferase (MT) domain within BOA6 is probably responsible for the incorporation of four methyl groups. The trans-enoyl reductase BOA5 might take over the enoyl reductase function of BOA6 that misses an ER domain. The monooxygenases BOA2, BOA3 and BOA4 might be involved in further hydroxylations at C4, C5 and C8, whereas BOA7, close to BOA9, could potentially be involved in the hydroxylation at C4 in the side chain of botcinins. This is Probable thioesterase BOA10 from Botryotinia fuckeliana (strain B05.10) (Noble rot fungus).